The sequence spans 439 residues: Ribosomal protein uS12 methylthiotransferase RimO (439 aa).

Residues 3 to 113 (HKVGFVSLGC…VVNAVHQHLP (111 aa)) enclose the MTTase N-terminal domain. 6 residues coordinate [4Fe-4S] cluster: cysteine 12, cysteine 48, cysteine 77, cysteine 144, cysteine 148, and cysteine 151. The Radical SAM core domain occupies 130–367 (LTPRHYAYLK…MQVQAEISRN (238 aa)). The 67-residue stretch at 370 to 436 (KNKIGSTQTV…DYDLYGDLEY (67 aa)) folds into the TRAM domain.

Belongs to the methylthiotransferase family. RimO subfamily. The cofactor is [4Fe-4S] cluster.

The protein localises to the cytoplasm. The enzyme catalyses L-aspartate(89)-[ribosomal protein uS12]-hydrogen + (sulfur carrier)-SH + AH2 + 2 S-adenosyl-L-methionine = 3-methylsulfanyl-L-aspartate(89)-[ribosomal protein uS12]-hydrogen + (sulfur carrier)-H + 5'-deoxyadenosine + L-methionine + A + S-adenosyl-L-homocysteine + 2 H(+). Catalyzes the methylthiolation of an aspartic acid residue of ribosomal protein uS12. This Legionella pneumophila (strain Corby) protein is Ribosomal protein uS12 methylthiotransferase RimO.